Here is a 349-residue protein sequence, read N- to C-terminus: Phenylalanine--tRNA ligase alpha subunit (349 aa).

Residue Glu-261 participates in Mg(2+) binding.

Belongs to the class-II aminoacyl-tRNA synthetase family. Phe-tRNA synthetase alpha subunit type 1 subfamily. In terms of assembly, tetramer of two alpha and two beta subunits. Mg(2+) is required as a cofactor.

It localises to the cytoplasm. The catalysed reaction is tRNA(Phe) + L-phenylalanine + ATP = L-phenylalanyl-tRNA(Phe) + AMP + diphosphate + H(+). The polypeptide is Phenylalanine--tRNA ligase alpha subunit (Leuconostoc citreum (strain KM20)).